We begin with the raw amino-acid sequence, 98 residues long: Small ribosomal subunit protein bS20 (98 aa).

This sequence belongs to the bacterial ribosomal protein bS20 family.

Binds directly to 16S ribosomal RNA. The polypeptide is Small ribosomal subunit protein bS20 (Parasynechococcus marenigrum (strain WH8102)).